A 325-amino-acid chain; its full sequence is Beta-ketoacyl-[acyl-carrier-protein] synthase III (325 aa).

Catalysis depends on residues cysteine 113 and histidine 250. Residues 251–255 are ACP-binding; that stretch reads QANIR. Asparagine 280 is a catalytic residue.

The protein belongs to the thiolase-like superfamily. FabH family. Homodimer.

Its subcellular location is the cytoplasm. The catalysed reaction is malonyl-[ACP] + acetyl-CoA + H(+) = 3-oxobutanoyl-[ACP] + CO2 + CoA. It participates in lipid metabolism; fatty acid biosynthesis. Its function is as follows. Catalyzes the condensation reaction of fatty acid synthesis by the addition to an acyl acceptor of two carbons from malonyl-ACP. Catalyzes the first condensation reaction which initiates fatty acid synthesis and may therefore play a role in governing the total rate of fatty acid production. Possesses both acetoacetyl-ACP synthase and acetyl transacylase activities. Its substrate specificity determines the biosynthesis of branched-chain and/or straight-chain of fatty acids. The protein is Beta-ketoacyl-[acyl-carrier-protein] synthase III of Streptococcus suis (strain 98HAH33).